The chain runs to 406 residues: Eukaryotic initiation factor 4A-I (406 aa).

Positions 1–21 (MSASQDSRSRDNGPDGMEPEG) are disordered. Residue Ser2 is modified to N-acetylserine. Ser4 is modified (phosphoserine). The Q motif signature appears at 32–60 (DSFDDMNLSESLLRGIYAYGFEKPSAIQQ). The Helicase ATP-binding domain maps to 63–234 (ILPCIKGYDV…KKFMRDPIRI (172 aa)). 76–83 (AQSGTGKT) contacts ATP. Lys118 is subject to N6-acetyllysine. Residue Lys146 forms a Glycyl lysine isopeptide (Lys-Gly) (interchain with G-Cter in SUMO2) linkage. Thr158 carries the post-translational modification Phosphothreonine. The residue at position 174 (Lys174) is an N6-acetyllysine. The DEAD box signature appears at 182–185 (DEAD). The residue at position 193 (Lys193) is an N6-acetyllysine. A Glycyl lysine isopeptide (Lys-Gly) (interchain with G-Cter in SUMO2) cross-link involves residue Lys225. Lys238 is subject to N6-acetyllysine; alternate. Lys238 is covalently cross-linked (Glycyl lysine isopeptide (Lys-Gly) (interchain with G-Cter in SUMO2); alternate). Residues 245-406 (GIRQFYINVE…EMPLNVADLI (162 aa)) enclose the Helicase C-terminal domain. Residues Lys309, Lys369, and Lys381 each participate in a glycyl lysine isopeptide (Lys-Gly) (interchain with G-Cter in SUMO2) cross-link.

It belongs to the DEAD box helicase family. eIF4A subfamily. EIF4F is a multi-subunit complex, the composition of which varies with external and internal environmental conditions. It is composed of at least EIF4A, EIF4E and EIF4G1/EIF4G3. Interacts with PAIP1, EIF4E and UPF2. Found in a complex with XPO7, EIF4A1, ARHGAP1, VPS26A, VPS29, VPS35 and SFN. May interact with NOM1. Interacts with PDCD4; this interferes with the interaction between EIF4A and EIF4G. Interacts with RBM4. Interacts with DDX3X in an RNA-independent manner. Interacts with PKP1 (via N-terminus); the interaction promotes EIF4A1 recruitment to the cap-dependent translation complex and EIF4A1 ATPase activity.

It localises to the cytoplasm. The protein resides in the perinuclear region. Its subcellular location is the cell membrane. It is found in the stress granule. The enzyme catalyses ATP + H2O = ADP + phosphate + H(+). ATP-dependent RNA helicase which is a subunit of the eIF4F complex involved in cap recognition and is required for mRNA binding to ribosome. In the current model of translation initiation, eIF4A unwinds RNA secondary structures in the 5'-UTR of mRNAs which is necessary to allow efficient binding of the small ribosomal subunit, and subsequent scanning for the initiator codon. As a result, promotes cell proliferation and growth. The polypeptide is Eukaryotic initiation factor 4A-I (EIF4A1) (Bos taurus (Bovine)).